The following is a 282-amino-acid chain: 2-dehydro-3-deoxyphosphooctonate aldolase (282 aa).

It belongs to the KdsA family.

It localises to the cytoplasm. The catalysed reaction is D-arabinose 5-phosphate + phosphoenolpyruvate + H2O = 3-deoxy-alpha-D-manno-2-octulosonate-8-phosphate + phosphate. It participates in carbohydrate biosynthesis; 3-deoxy-D-manno-octulosonate biosynthesis; 3-deoxy-D-manno-octulosonate from D-ribulose 5-phosphate: step 2/3. Its pathway is bacterial outer membrane biogenesis; lipopolysaccharide biosynthesis. This chain is 2-dehydro-3-deoxyphosphooctonate aldolase, found in Shewanella sp. (strain W3-18-1).